The following is a 544-amino-acid chain: Prolyl 4-hydroxylase subunit alpha-3 (544 aa).

Residues methionine 1 to glycine 19 form the signal peptide. Positions leucine 107 to glutamate 131 form a coiled coil. One copy of the TPR repeat lies at glutamate 227–asparagine 260. Asparagine 248 carries N-linked (GlcNAc...) asparagine glycosylation. Residues tyrosine 422 to glutamate 529 enclose the Fe2OG dioxygenase domain. Fe cation contacts are provided by histidine 440 and aspartate 442. A glycan (N-linked (GlcNAc...) asparagine) is linked at asparagine 482. Histidine 510 provides a ligand contact to Fe cation. Lysine 520 is a binding site for 2-oxoglutarate.

The protein belongs to the P4HA family. Heterotetramer of two alpha-3 chains and two beta chains (the beta chain is the multi-functional PDI). The cofactor is Fe(2+). It depends on L-ascorbate as a cofactor. N-glycosylation plays no role in the catalytic activity.

It localises to the endoplasmic reticulum lumen. It catalyses the reaction L-prolyl-[collagen] + 2-oxoglutarate + O2 = trans-4-hydroxy-L-prolyl-[collagen] + succinate + CO2. Its function is as follows. Catalyzes the post-translational formation of 4-hydroxyproline in -Xaa-Pro-Gly- sequences in collagens and other proteins. This Bos taurus (Bovine) protein is Prolyl 4-hydroxylase subunit alpha-3 (P4HA3).